Here is a 164-residue protein sequence, read N- to C-terminus: UPF0225 protein Shewmr4_2054 (164 aa).

This sequence belongs to the UPF0225 family.

The sequence is that of UPF0225 protein Shewmr4_2054 from Shewanella sp. (strain MR-4).